A 308-amino-acid polypeptide reads, in one-letter code: Porphobilinogen deaminase (308 aa).

At Cys-241 the chain carries S-(dipyrrolylmethanemethyl)cysteine.

The protein belongs to the HMBS family. Monomer. It depends on dipyrromethane as a cofactor.

It catalyses the reaction 4 porphobilinogen + H2O = hydroxymethylbilane + 4 NH4(+). The protein operates within porphyrin-containing compound metabolism; protoporphyrin-IX biosynthesis; coproporphyrinogen-III from 5-aminolevulinate: step 2/4. Tetrapolymerization of the monopyrrole PBG into the hydroxymethylbilane pre-uroporphyrinogen in several discrete steps. This is Porphobilinogen deaminase from Staphylococcus epidermidis (strain ATCC 35984 / DSM 28319 / BCRC 17069 / CCUG 31568 / BM 3577 / RP62A).